A 1849-amino-acid chain; its full sequence is NADH-ubiquinone oxidoreductase chain 5 (1849 aa).

The next 41 membrane-spanning stretches (helical) occupy residues 76–93 (YLLL…TVCY), 98–120 (LILL…YLQY), 190–212 (YWLC…IIGW), 222–244 (LVPT…IYLY), 279–301 (HLLT…ILSS), 316–338 (LALQ…ILCY), 358–380 (LEII…ILSV), 390–412 (VIIL…TILI), 419–441 (IAVY…IWLL), 483–505 (LLDA…CLGV), 510–532 (LFIA…LQVV), 536–558 (ISYI…VYSI), 565–587 (LIMY…IHTI), 621–640 (IWLI…STLV), 683–705 (WVRF…YVQF), 718–740 (LTRI…QGIL), 745–767 (IISY…LTIL), 797–819 (PTWV…LVTV), 868–890 (ILLL…LLSL), 905–927 (LTVQ…YIVL), 966–988 (LYSY…SLLE), 1008–1030 (PDLL…ELLL), 1073–1095 (LTVV…QILF), 1105–1127 (LATI…LSYL), 1172–1194 (TYLL…IYII), 1219–1241 (VYFL…FFYH), 1248–1270 (GIFY…TLYY), 1296–1318 (IITF…AIIL), 1330–1352 (FAYN…IVSY), 1357–1379 (MIIF…YARI), 1418–1440 (LFAL…FDFT), 1444–1466 (VIVF…FVWL), 1478–1500 (ALIH…APIL), 1504–1526 (VYTL…ILAT), 1533–1555 (KAVA…FLAF), 1559–1581 (LIYL…YIVH), 1602–1624 (IAIY…GFFA), 1639–1661 (VATF…LYRI), 1719–1741 (LLHL…LVTG), 1773–1795 (VRNI…TAIN), and 1802–1824 (IIYL…HYFL).

It belongs to the complex I subunit 5 family.

The protein resides in the hydrogenosome membrane. The catalysed reaction is a ubiquinone + NADH + 5 H(+)(in) = a ubiquinol + NAD(+) + 4 H(+)(out). The polypeptide is NADH-ubiquinone oxidoreductase chain 5 (nad5) (Nyctotherus ovalis).